Consider the following 283-residue polypeptide: Bifunctional protein FolD (283 aa).

NADP(+)-binding positions include 165–167 (GAS), Ser-190, and Ile-231.

This sequence belongs to the tetrahydrofolate dehydrogenase/cyclohydrolase family. In terms of assembly, homodimer.

It carries out the reaction (6R)-5,10-methylene-5,6,7,8-tetrahydrofolate + NADP(+) = (6R)-5,10-methenyltetrahydrofolate + NADPH. It catalyses the reaction (6R)-5,10-methenyltetrahydrofolate + H2O = (6R)-10-formyltetrahydrofolate + H(+). Its pathway is one-carbon metabolism; tetrahydrofolate interconversion. Catalyzes the oxidation of 5,10-methylenetetrahydrofolate to 5,10-methenyltetrahydrofolate and then the hydrolysis of 5,10-methenyltetrahydrofolate to 10-formyltetrahydrofolate. The polypeptide is Bifunctional protein FolD (Bordetella bronchiseptica (strain ATCC BAA-588 / NCTC 13252 / RB50) (Alcaligenes bronchisepticus)).